Here is a 392-residue protein sequence, read N- to C-terminus: Vascular endothelial growth factor A, long form (392 aa).

Disordered stretches follow at residues 1–44 (MTDR…VEGV) and 73–174 (DKPI…GPGR). Residues 89-104 (PGPEKRGEEEKEEERG) show a composition bias toward basic and acidic residues. Low complexity-rich tracts occupy residues 121 to 143 (AAVCADSAPAARAPQAPARASVP) and 158 to 174 (PRSPSRRGSASRAGPGR). Cystine bridges form between cysteine 229-cysteine 271, cysteine 260-cysteine 305, and cysteine 264-cysteine 307. An N-linked (GlcNAc...) asparagine glycan is attached at asparagine 278. Residues 309 to 320 (PKKDRTKPEKKS) are compositionally biased toward basic and acidic residues. The disordered stretch occupies residues 309 to 337 (PKKDRTKPEKKSVRGKGKGQKRKRKKSRF). A compositionally biased stretch (basic residues) spans 321–337 (VRGKGKGQKRKRKKSRF).

Belongs to the PDGF/VEGF growth factor family. Homodimer; disulfide-linked. Also found as heterodimer with PGF. Interacts with NRP1. Interacts with isoform 2 of BSG. Interacts with CD82; this interaction inhibits VEGFA-mediated signaling pathway. Produced by use of an alternative upstream CUG codon and post-translationally processed into the N-terminal N-VEGF form and the C-terminal secreted VEGFA form. In developing embryos, expressed mainly in the choroid plexus, paraventricular neuroepithelium, placenta and kidney glomeruli. Also found in bronchial epithelium, adrenal gland and in seminiferous tubules of testis. High expression continues in kidney glomeruli and choroid plexus in adults.

It is found in the cytoplasm. The protein localises to the nucleus. It localises to the secreted. Its subcellular location is the endoplasmic reticulum. The protein resides in the golgi apparatus. It is found in the extracellular space. The protein localises to the extracellular matrix. It localises to the cell membrane. Participates in the induction of key genes involved in the response to hypoxia and in the induction of angiogenesis such as HIF1A. Involved in protecting cells from hypoxia-mediated cell death. In terms of biological role, growth factor active in angiogenesis, vasculogenesis and endothelial cell growth. Induces endothelial cell proliferation, promotes cell migration, inhibits apoptosis and induces permeabilization of blood vessels. Binds to the FLT1/VEGFR1 and KDR/VEGFR2 receptors, heparan sulfate and heparin. Binds to the NRP1/neuropilin-1 receptor. Binding to NRP1 receptor initiates a signaling pathway needed for motor neuron axon guidance and cell body migration, including for the caudal migration of facial motor neurons from rhombomere 4 to rhombomere 6 during embryonic development. Also binds the DEAR/FBXW7-AS1 receptor. May play a role in increasing vascular permeability during lactation, when increased transport of molecules from the blood is required for efficient milk protein synthesis. The polypeptide is Vascular endothelial growth factor A, long form (Vegfa) (Mus musculus (Mouse)).